Consider the following 111-residue polypeptide: Large ribosomal subunit protein P1 (111 aa).

A compositionally biased stretch (low complexity) spans 65 to 89 (SGAGSGPAPAAAAAAPAAGGAAPAA). The interval 65–111 (SGAGSGPAPAAAAAAPAAGGAAPAAETKKKEEPKEESDDDMGFGLFD) is disordered.

This sequence belongs to the eukaryotic ribosomal protein P1/P2 family. As to quaternary structure, P1 and P2 exist as dimers at the large ribosomal subunit.

Its function is as follows. Plays an important role in the elongation step of protein synthesis. The protein is Large ribosomal subunit protein P1 of Caenorhabditis elegans.